The sequence spans 545 residues: Probable intron-encoded endonuclease 4 (545 aa).

The next 7 membrane-spanning stretches (helical) occupy residues 1–21 (MYLS…FFGR), 30–50 (LITC…FFEV), 81–101 (LTVA…IYSI), 119–139 (LFTF…MFVG), 140–160 (WEGV…RIAA), 177–197 (FLTI…YATV), and 200–220 (LAPY…LIGA). The interval 1–239 (MYLSIIILPL…HVWLPMAMEG (239 aa)) is ndh-5 exons 1 and 2 encoded. Residues 240 to 545 (FFSRAFLKLH…NNINKSDYNK (306 aa)) are ndh-5 intron 2 encoded.

The protein in the N-terminal section; belongs to the complex I subunit 5 family. This sequence in the C-terminal section; belongs to the LAGLIDADG endonuclease family.

It is found in the mitochondrion membrane. Mitochondrial DNA endonuclease involved in intron homing. This chain is Probable intron-encoded endonuclease 4, found in Neurospora crassa (strain ATCC 24698 / 74-OR23-1A / CBS 708.71 / DSM 1257 / FGSC 987).